A 74-amino-acid chain; its full sequence is Exodeoxyribonuclease 7 small subunit (74 aa).

It belongs to the XseB family. In terms of assembly, heterooligomer composed of large and small subunits.

It localises to the cytoplasm. It carries out the reaction Exonucleolytic cleavage in either 5'- to 3'- or 3'- to 5'-direction to yield nucleoside 5'-phosphates.. Bidirectionally degrades single-stranded DNA into large acid-insoluble oligonucleotides, which are then degraded further into small acid-soluble oligonucleotides. This is Exodeoxyribonuclease 7 small subunit from Clostridium botulinum (strain Eklund 17B / Type B).